We begin with the raw amino-acid sequence, 360 residues long: Alkanal monooxygenase alpha chain (360 aa).

This sequence belongs to the bacterial luciferase oxidoreductase family. In terms of assembly, heterodimer of an alpha and a beta chain.

The catalysed reaction is a long-chain fatty aldehyde + FMNH2 + O2 = a long-chain fatty acid + hnu + FMN + H2O + 2 H(+). In terms of biological role, light-emitting reaction in luminous bacteria. The chain is Alkanal monooxygenase alpha chain (luxA) from Photorhabdus luminescens (Xenorhabdus luminescens).